The sequence spans 253 residues: Triosephosphate isomerase (253 aa).

9-11 lines the substrate pocket; the sequence is NWK. Residue histidine 97 is the Electrophile of the active site. The active-site Proton acceptor is the glutamate 169. Substrate-binding positions include glycine 175, serine 215, and 236 to 237; that span reads GG.

It belongs to the triosephosphate isomerase family. Homodimer.

Its subcellular location is the cytoplasm. The catalysed reaction is D-glyceraldehyde 3-phosphate = dihydroxyacetone phosphate. The protein operates within carbohydrate biosynthesis; gluconeogenesis. It participates in carbohydrate degradation; glycolysis; D-glyceraldehyde 3-phosphate from glycerone phosphate: step 1/1. Involved in the gluconeogenesis. Catalyzes stereospecifically the conversion of dihydroxyacetone phosphate (DHAP) to D-glyceraldehyde-3-phosphate (G3P). The chain is Triosephosphate isomerase from Staphylococcus epidermidis (strain ATCC 35984 / DSM 28319 / BCRC 17069 / CCUG 31568 / BM 3577 / RP62A).